An 827-amino-acid chain; its full sequence is Lon protease (827 aa).

A disordered region spans residues 1–27 (MNDETLREQTTAESEETSPTTPSPEPE). A Lon N-terminal domain is found at 32-225 (LPLIPLEGAV…KVLMFYRKQF (194 aa)). 385–392 (GPPGVGKT) contributes to the ATP binding site. Residues 625–806 (IDQPGVAIGL…DEVLSIALLP (182 aa)) form the Lon proteolytic domain. Active-site residues include Ser-712 and Lys-755.

This sequence belongs to the peptidase S16 family. As to quaternary structure, homohexamer. Organized in a ring with a central cavity.

It is found in the cytoplasm. The enzyme catalyses Hydrolysis of proteins in presence of ATP.. In terms of biological role, ATP-dependent serine protease that mediates the selective degradation of mutant and abnormal proteins as well as certain short-lived regulatory proteins. Required for cellular homeostasis and for survival from DNA damage and developmental changes induced by stress. Degrades polypeptides processively to yield small peptide fragments that are 5 to 10 amino acids long. Binds to DNA in a double-stranded, site-specific manner. In Chloroflexus aurantiacus (strain ATCC 29366 / DSM 635 / J-10-fl), this protein is Lon protease.